The sequence spans 91 residues: Probable Fe(2+)-trafficking protein (91 aa).

This sequence belongs to the Fe(2+)-trafficking protein family. In terms of assembly, monomer.

Functionally, could be a mediator in iron transactions between iron acquisition and iron-requiring processes, such as synthesis and/or repair of Fe-S clusters in biosynthetic enzymes. This chain is Probable Fe(2+)-trafficking protein, found in Klebsiella pneumoniae subsp. pneumoniae (strain ATCC 700721 / MGH 78578).